The following is a 634-amino-acid chain: DNA gyrase subunit B (634 aa).

Positions 416–530 (REIYIVEGDS…NGHVYIAMPP (115 aa)) constitute a Toprim domain. Residues Glu-422, Asp-495, and Asp-497 each contribute to the Mg(2+) site.

The protein belongs to the type II topoisomerase GyrB family. Heterotetramer, composed of two GyrA and two GyrB chains. In the heterotetramer, GyrA contains the active site tyrosine that forms a transient covalent intermediate with DNA, while GyrB binds cofactors and catalyzes ATP hydrolysis. Requires Mg(2+) as cofactor. It depends on Mn(2+) as a cofactor. The cofactor is Ca(2+).

It is found in the cytoplasm. It carries out the reaction ATP-dependent breakage, passage and rejoining of double-stranded DNA.. A type II topoisomerase that negatively supercoils closed circular double-stranded (ds) DNA in an ATP-dependent manner to modulate DNA topology and maintain chromosomes in an underwound state. Negative supercoiling favors strand separation, and DNA replication, transcription, recombination and repair, all of which involve strand separation. Also able to catalyze the interconversion of other topological isomers of dsDNA rings, including catenanes and knotted rings. Type II topoisomerases break and join 2 DNA strands simultaneously in an ATP-dependent manner. In Borrelia hermsii, this protein is DNA gyrase subunit B.